The chain runs to 202 residues: MKLNSNVKIVAKKCILVPYEPCHVAKYHKWMENEEIRRLTGSEQLSLDEEYEMQKTWRNDEDKLTFIVLEMNESGEEVDHMLGDVNLFISTSPSTENPSDDVITGEVEVMIAEPRGRGKGIGEEAVRVIIAWAYENLKIEQFCVKITDDNTPSLSLFKKKLGFKQIGYSTAFKEFTFELPKNRLISEFSSFLEKNAEIKEYK.

In terms of domain architecture, N-acetyltransferase spans 34 to 184 (EEIRRLTGSE…FTFELPKNRL (151 aa)).

Belongs to the acetyltransferase family. GNAT subfamily.

The chain is N-acetyltransferase 9-like protein from Caenorhabditis elegans.